A 76-amino-acid polypeptide reads, in one-letter code: MSKAHPPELKKFTDKKFSLKLNGGRHVQGILRGFDPFMNLVIDECVEMATSGQQKNIGMVEIRGNSIIMLEALERV.

Residues 4–76 (AHPPELKKFT…IIMLEALERV (73 aa)) form the Sm domain.

It belongs to the snRNP Sm proteins family.

It localises to the nucleus. Associated with snRNP U1, U2, U4/U6 and U5. In Homo sapiens (Human), this protein is Putative small nuclear ribonucleoprotein G-like protein 15 (SNRPGP15).